A 218-amino-acid polypeptide reads, in one-letter code: Hypoxanthine-guanine phosphoribosyltransferase (218 aa).

GMP is bound at residue K69. K103 carries the post-translational modification N6-acetyllysine. K115 is covalently cross-linked (Glycyl lysine isopeptide (Lys-Gly) (interchain with G-Cter in SUMO1); alternate). K115 participates in a covalent cross-link: Glycyl lysine isopeptide (Lys-Gly) (interchain with G-Cter in SUMO2); alternate. GMP is bound by residues 134-142, K166, 186-188, and D194; these read EDIIDTGKT and KFV. Residue D138 is the Proton acceptor of the active site. T142 is modified (phosphothreonine). D194 provides a ligand contact to Mg(2+).

It belongs to the purine/pyrimidine phosphoribosyltransferase family. In terms of assembly, homotetramer. Mg(2+) serves as cofactor.

It is found in the cytoplasm. The enzyme catalyses IMP + diphosphate = hypoxanthine + 5-phospho-alpha-D-ribose 1-diphosphate. It carries out the reaction GMP + diphosphate = guanine + 5-phospho-alpha-D-ribose 1-diphosphate. The protein operates within purine metabolism; IMP biosynthesis via salvage pathway; IMP from hypoxanthine: step 1/1. Converts guanine to guanosine monophosphate, and hypoxanthine to inosine monophosphate. Transfers the 5-phosphoribosyl group from 5-phosphoribosylpyrophosphate onto the purine. Plays a central role in the generation of purine nucleotides through the purine salvage pathway. The protein is Hypoxanthine-guanine phosphoribosyltransferase (Hprt1) of Mus musculus (Mouse).